A 170-amino-acid polypeptide reads, in one-letter code: uncharacterized protein (170 aa).

The region spanning 8–167 (LLIREFEFKD…DEYYYAILEE (160 aa)) is the N-acetyltransferase domain.

Belongs to the acetyltransferase family.

This is an uncharacterized protein from Bacillus subtilis (strain 168).